The primary structure comprises 431 residues: Protein EARLY STARVATION 1, chloroplastic (431 aa).

The transit peptide at Met1–Gly19 directs the protein to the chloroplast. Disordered stretches follow at residues Gly65–Ile126 and Gly403–Glu431. Over residues Pro415 to Glu431 the composition is skewed to pro residues.

Belongs to the ESV1 family.

It is found in the plastid. The protein localises to the chloroplast stroma. Binds preferentially to highly ordered alpha-glucans, such as starch and crystalline maltodextrins. Involved in the organization of the starch granule matrix, thus influencing starch turnover by modulating the accessibility of starch polymers to modifying and degrading enzymes. Required for the control of starch degradation in leaves and starch distribution in nonphotosynthetic parts. Promotes gravitropic responses, negative in shoots but positive in roots, by facilitating starch granules (statoliths) formation in hypocotyls and roots columella. Facilitates tight packing of starch granules in grains. This chain is Protein EARLY STARVATION 1, chloroplastic, found in Oryza sativa subsp. japonica (Rice).